A 156-amino-acid chain; its full sequence is Transcription elongation factor GreA (156 aa).

The stretch at 1 to 32 (MKKVRLTREGYEKLKKELEDLKRKFMYEISER) forms a coiled coil.

The protein belongs to the GreA/GreB family.

In terms of biological role, necessary for efficient RNA polymerase transcription elongation past template-encoded arresting sites. The arresting sites in DNA have the property of trapping a certain fraction of elongating RNA polymerases that pass through, resulting in locked ternary complexes. Cleavage of the nascent transcript by cleavage factors such as GreA or GreB allows the resumption of elongation from the new 3'terminus. GreA releases sequences of 2 to 3 nucleotides. The chain is Transcription elongation factor GreA from Thermotoga petrophila (strain ATCC BAA-488 / DSM 13995 / JCM 10881 / RKU-1).